The primary structure comprises 74 residues: UPF0346 protein RBAM_019500 (74 aa).

The protein belongs to the UPF0346 family.

This Bacillus velezensis (strain DSM 23117 / BGSC 10A6 / LMG 26770 / FZB42) (Bacillus amyloliquefaciens subsp. plantarum) protein is UPF0346 protein RBAM_019500.